The following is a 247-amino-acid chain: Cell division protein ZapD (247 aa).

It belongs to the ZapD family. Interacts with FtsZ.

Its subcellular location is the cytoplasm. Cell division factor that enhances FtsZ-ring assembly. Directly interacts with FtsZ and promotes bundling of FtsZ protofilaments, with a reduction in FtsZ GTPase activity. This Salmonella dublin (strain CT_02021853) protein is Cell division protein ZapD.